Consider the following 289-residue polypeptide: MATYNGECWIEEQLKSIIEQKDVDISIFISDDLSTDNTLNICEEFQLSYPSIINILPSVNKFGGAGKNFYRLIKDVDLENYDYICFSDQDDIWYKDKIKNAIDCLVFNNANCYSSNVIAYYPSGRKNLVDKAQSQTQFDYFFEAAGPGCTYVIKKETLIEFKKFIINNKNAAQDICLHDWFLYSFARTRNYSWYIDRKPTMLYRQHENNQVGANISFKAKYKRLGLVRNKWYRKEVTKIANALADDSFVNNQLGKGYIGNLILALSFWKLRRKKADKIYILLMLILNIF.

This sequence belongs to the glycosyltransferase 2 family.

The protein operates within bacterial outer membrane biogenesis; lipopolysaccharide biosynthesis. This chain is dTDP-rhamnosyl transferase RfbG (rfbG), found in Shigella flexneri.